Consider the following 1964-residue polypeptide: Neurogenic locus notch homolog protein 4 (1964 aa).

The first 20 residues, 1 to 20 (MQPQLLLLLLLPLNFPVILT), serve as a signal peptide directing secretion. EGF-like domains lie at 21–60 (RELL…ETCQ), 61–112 (FPDP…DRCQ), 115–152 (LEEL…EQCQ), and 153–189 (LRDF…HTCE). At 21 to 1443 (RELLCGGSPE…TRPSANQLPW (1423 aa)) the chain is on the extracellular side. 95 disulfide bridges follow: Cys-25-Cys-38, Cys-32-Cys-48, Cys-50-Cys-59, Cys-65-Cys-77, Cys-71-Cys-100, Cys-102-Cys-111, Cys-119-Cys-130, Cys-124-Cys-140, Cys-142-Cys-151, Cys-157-Cys-168, Cys-162-Cys-177, Cys-179-Cys-188, Cys-195-Cys-208, Cys-202-Cys-217, Cys-219-Cys-228, Cys-235-Cys-246, Cys-240-Cys-259, Cys-261-Cys-270, Cys-277-Cys-288, Cys-282-Cys-297, Cys-299-Cys-308, Cys-315-Cys-329, Cys-323-Cys-338, Cys-340-Cys-349, Cys-356-Cys-367, Cys-361-Cys-376, Cys-378-Cys-387, Cys-393-Cys-404, Cys-398-Cys-415, Cys-417-Cys-426, Cys-433-Cys-449, Cys-443-Cys-458, Cys-460-Cys-469, Cys-476-Cys-487, Cys-481-Cys-496, Cys-498-Cys-507, Cys-514-Cys-525, Cys-519-Cys-534, Cys-536-Cys-545, Cys-552-Cys-563, Cys-557-Cys-572, Cys-574-Cys-583, Cys-590-Cys-601, Cys-595-Cys-610, Cys-612-Cys-621, Cys-626-Cys-637, Cys-631-Cys-646, Cys-648-Cys-655, Cys-662-Cys-669, Cys-664-Cys-674, Cys-676-Cys-685, Cys-692-Cys-703, Cys-697-Cys-712, Cys-714-Cys-723, Cys-730-Cys-741, Cys-735-Cys-750, Cys-752-Cys-761, Cys-768-Cys-779, Cys-773-Cys-788, Cys-790-Cys-799, Cys-807-Cys-818, Cys-812-Cys-827, Cys-829-Cys-838, Cys-845-Cys-856, Cys-850-Cys-865, Cys-867-Cys-876, Cys-882-Cys-903, Cys-897-Cys-912, Cys-914-Cys-923, Cys-930-Cys-941, Cys-935-Cys-950, Cys-952-Cys-961, Cys-968-Cys-979, Cys-973-Cys-988, Cys-990-Cys-999, Cys-1006-Cys-1019, Cys-1011-Cys-1028, Cys-1030-Cys-1039, Cys-1046-Cys-1057, Cys-1051-Cys-1069, Cys-1071-Cys-1080, Cys-1087-Cys-1098, Cys-1092-Cys-1110, Cys-1112-Cys-1121, Cys-1130-Cys-1142, Cys-1136-Cys-1155, Cys-1157-Cys-1166, Cys-1174-Cys-1187, Cys-1183-Cys-1199, Cys-1210-Cys-1234, Cys-1216-Cys-1229, Cys-1225-Cys-1241, Cys-1247-Cys-1273, Cys-1255-Cys-1268, and Cys-1264-Cys-1280. Residues 191–229 (DINECFLEPGPCPQGTSCHNTLGSYQCLCPVGQEGPQCK) form the EGF-like 5; calcium-binding domain. The 41-residue stretch at 231–271 (RKGACPPGSCLNGGTCQLVPEGHSTFHLCLCPPGFTGLDCE) folds into the EGF-like 6 domain. The region spanning 273–309 (NPDDCVRHQCQNGATCLDGLDTYTCLCPKTWKGWDCS) is the EGF-like 7; calcium-binding domain. The EGF-like 8; calcium-binding domain occupies 311–350 (DIDECEARGPPRCRNGGTCQNTAGSFHCVCVSGWGGAGCE). The EGF-like 9; calcium-binding domain maps to 352 to 388 (NLDDCAAATCAPGSTCIDRVGSFSCLCPPGRTGLLCH). The region spanning 389 to 427 (LEDMCLSQPCHVNAQCSTNPLTGSTLCICQPGYSGSTCH) is the EGF-like 10 domain. Residues 429–470 (DLDECQMAQQGPSPCEHGGSCINTPGSFNCLCLPGYTGSRCE) enclose the EGF-like 11; calcium-binding domain. One can recognise an EGF-like 12; calcium-binding domain in the interval 472-508 (DHNECLSQPCHPGSTCLDLLATFHCLCPPGLEGRLCE). In terms of domain architecture, EGF-like 13; calcium-binding spans 510–546 (EVNECTSNPCLNQAACHDLLNGFQCLCLPGFTGARCE). The region spanning 548 to 584 (DMDECSSTPCANGGRCRDQPGAFYCECLPGFEGPHCE) is the EGF-like 14; calcium-binding domain. One can recognise an EGF-like 15; calcium-binding domain in the interval 586–622 (EVDECLSDPCPVGASCLDLPGAFFCLCRPGFTGQLCE). EGF-like domains follow at residues 623–656 (VPLC…PGCV), 658–686 (AEDN…PECE), 688–724 (ELGG…LTCS), 726–762 (EVTA…RHCQ), 764–800 (AVDH…LHCE), 803–839 (TNPS…SSCQ), 841–877 (LIDL…ALCD), 878–924 (FPLS…KLCQ), 926–962 (NVNP…QNCS), 964–1000 (VLDA…LRCE), 1002–1040 (DVDE…QRCE), 1042–1081 (EMDL…PTCS), 1083–1122 (KALS…PDCL), and 1126–1167 (APPG…PRCQ). N-linked (GlcNAc...) asparagine glycosylation is present at Asn-711. The N-linked (GlcNAc...) asparagine glycan is linked to Asn-960. Asn-1139 carries an N-linked (GlcNAc...) asparagine glycan. LNR repeat units follow at residues 1166–1209 (CQRP…PWKG), 1210–1241 (CPPH…GYDC), and 1247–1287 (CIPA…GEDS). The segment at 1345–1369 (EELSGARDSSSWERQAPPTQPLGKE) is disordered. The chain crosses the membrane as a helical span at residues 1444–1464 (PILCSPVVGVLLLALGALLVL). Residues 1465–1964 (QLIRRRRREH…PLNSVVRNLN (500 aa)) lie on the Cytoplasmic side of the membrane. Residues 1516-1535 (VDEDGVAMCSGPEEGEAEET) are disordered. 5 ANK repeats span residues 1628 to 1657 (TGET…NPNQ), 1661 to 1691 (AGRT…TVDA), 1695 to 1724 (DGTT…DVGA), 1728 to 1757 (RGKT…DKDA), and 1761 to 1790 (REQT…ARGL). The disordered stretch occupies residues 1879-1907 (RSGSCGGPTTRGRRFSAGSRGRRGARASQ).

The protein belongs to the NOTCH family. As to quaternary structure, heterodimer of a C-terminal fragment N(TM) and a N-terminal fragment N(EC) which are probably linked by disulfide bonds. Interacts with MAML1, MAML2 and MAML3 which act as transcriptional coactivators for NOTCH4. Synthesized in the endoplasmic reticulum as an inactive form which is proteolytically cleaved by a furin-like convertase in the trans-Golgi network before it reaches the plasma membrane to yield an active, ligand-accessible form. Cleavage results in a C-terminal fragment N(TM) and a N-terminal fragment N(EC). Following ligand binding, it is cleaved by TNF-alpha converting enzyme (TACE) to yield a membrane-associated intermediate fragment called notch extracellular truncation (NEXT). This fragment is then cleaved by presenilin dependent gamma-secretase to release a notch-derived peptide containing the intracellular domain (NICD) from the membrane. Post-translationally, phosphorylated. Highly expressed in lung, moderately in heart kidney, and at lower levels in the ovary and skeletal muscle. A very low expression is seen in the brain, intestine, liver and testis.

It localises to the cell membrane. Its subcellular location is the nucleus. Its function is as follows. Functions as a receptor for membrane-bound ligands Jagged1, Jagged2 and Delta1 to regulate cell-fate determination. Upon ligand activation through the released notch intracellular domain (NICD) it forms a transcriptional activator complex with RBPJ/RBPSUH and activates genes of the enhancer of split locus. Affects the implementation of differentiation, proliferation and apoptotic programs. May regulate branching morphogenesis in the developing vascular system. This chain is Neurogenic locus notch homolog protein 4, found in Mus musculus (Mouse).